Consider the following 596-residue polypeptide: Pescadillo homolog (596 aa).

One can recognise a BRCT domain in the interval P347–P440. The interval S449–M552 is disordered. The stretch at A460 to N596 forms a coiled coil. The span at L463–A500 shows a compositional bias: acidic residues. The segment covering E501 to E510 has biased composition (basic and acidic residues). Low complexity predominate over residues S519–K529.

The protein belongs to the pescadillo family. Component of the NOP7 complex, composed of ERB1, NOP7 and YTM1. The complex is held together by ERB1, which interacts with NOP7 via its N-terminal domain and with YTM1 via a high-affinity interaction between the seven-bladed beta-propeller domains of the 2 proteins. The NOP7 complex associates with the 66S pre-ribosome.

It is found in the nucleus. It localises to the nucleolus. Its subcellular location is the nucleoplasm. Functionally, component of the NOP7 complex, which is required for maturation of the 25S and 5.8S ribosomal RNAs and formation of the 60S ribosome. This chain is Pescadillo homolog, found in Eremothecium gossypii (strain ATCC 10895 / CBS 109.51 / FGSC 9923 / NRRL Y-1056) (Yeast).